The following is a 656-amino-acid chain: Broad substrate specificity ATP-binding cassette transporter ABCG2 (656 aa).

Residues 1-25 form a disordered region; the sequence is MSSNSYQVSIPMSKRNTNGLPGSSS. Over 1–394 the chain is Cytoplasmic; the sequence is MSSNSYQVSI…SFKNLLGNPQ (394 aa). The region spanning 37–286 is the ABC transporter domain; sequence LSFHDICYRV…FASIGYNCEP (250 aa). Residues 80 to 87, 184 to 190, Glu211, and His243 contribute to the ATP site; these read GPTGGGKS and RGVSGGE. One can recognise an ABC transmembrane type-2 domain in the interval 390–652; that stretch reads LGNPQASVAQ…TIAYLKLLLL (263 aa). Residues 395-415 traverse the membrane as a helical segment; the sequence is ASVAQIIVTIILGLVIGAIFY. At 416-429 the chain is on the extracellular side; it reads DLKNDPSGIQNRAG. Residues 430 to 450 form a helical membrane-spanning segment; sequence VLFFLTTNQCFSSVSAVELLV. At 451 to 478 the chain is on the cytoplasmic side; that stretch reads VEKKLFIHEYISGYYRVSSYFFGKLLSD. A helical transmembrane segment spans residues 479 to 498; sequence LLPMRMLPSIIFTCITYFLL. The Extracellular portion of the chain corresponds to 499–507; it reads GLKPAVGSF. The chain crosses the membrane as a helical span at residues 508–530; it reads FIMMFTLMMVAYSASSMALAIAA. The Cytoplasmic segment spans residues 531-536; it reads GQSVVS. The chain crosses the membrane as a helical span at residues 537–557; sequence VATLLMTISFVFMMIFSGLLV. Residues 558 to 631 are Extracellular-facing; sequence NLKTVVPWLS…LSAWGLWQNH (74 aa). A disulfide bridge connects residues Cys593 and Cys609. Residues Asn597 and Asn601 are each glycosylated (N-linked (GlcNAc...) asparagine). Residues 632 to 652 traverse the membrane as a helical segment; that stretch reads VALACMMVIFLTIAYLKLLLL. The Cytoplasmic segment spans residues 653–656; it reads KKYS.

Belongs to the ABC transporter superfamily. ABCG family. Eye pigment precursor importer (TC 3.A.1.204) subfamily. As to quaternary structure, homodimer; disulfide-linked. The minimal functional unit is a homodimer, but the major oligomeric form in plasma membrane is a homotetramer with possibility of higher order oligomerization up to homododecamers. N-glycosylated. Glycosylation-deficient ABCG2 is normally expressed and functional. Post-translationally, phosphorylated. Phosphorylation may regulate the localization to the plasma membrane, the homooligomerization and therefore, the activity of the transporter. High expression in brain, kidney and lung. Also expressed in livere, colon, small intestine, heart, skeletal muscle, spleen, stomach and pancreas.

The protein resides in the cell membrane. The protein localises to the apical cell membrane. It localises to the mitochondrion membrane. The catalysed reaction is ATP + H2O + xenobioticSide 1 = ADP + phosphate + xenobioticSide 2.. The enzyme catalyses urate(in) + ATP + H2O = urate(out) + ADP + phosphate + H(+). It carries out the reaction indoxyl sulfate(in) + ATP + H2O = indoxyl sulfate(out) + ADP + phosphate + H(+). It catalyses the reaction sphing-4-enine 1-phosphate(in) + ATP + H2O = sphing-4-enine 1-phosphate(out) + ADP + phosphate + H(+). The catalysed reaction is estrone 3-sulfate(in) + ATP + H2O = estrone 3-sulfate(out) + ADP + phosphate + H(+). The enzyme catalyses dehydroepiandrosterone 3-sulfate(in) + ATP + H2O = dehydroepiandrosterone 3-sulfate(out) + ADP + phosphate + H(+). It carries out the reaction 4-methylumbelliferone sulfate(in) + ATP + H2O = 4-methylumbelliferone sulfate(out) + ADP + phosphate + H(+). It catalyses the reaction 5,7-dimethyl-2-methylamino-4-(3-pyridylmethyl)-1,3-benzothiazol-6-yl beta-D-glucuronate(in) + ATP + H2O = 5,7-dimethyl-2-methylamino-4-(3-pyridylmethyl)-1,3-benzothiazol-6-yl beta-D-glucuronate(out) + ADP + phosphate + H(+). The catalysed reaction is 4-methylumbelliferone beta-D-glucuronate(in) + ATP + H2O = 4-methylumbelliferone beta-D-glucuronate(out) + ADP + phosphate + H(+). The enzyme catalyses 5,7-dimethyl-2-methylamino-4-(3-pyridylmethyl)-1,3-benzothiazol-6-yl sulfate(in) + ATP + H2O = 5,7-dimethyl-2-methylamino-4-(3-pyridylmethyl)-1,3-benzothiazol-6-yl sulfate(out) + ADP + phosphate + H(+). It carries out the reaction 17beta-estradiol 17-O-(beta-D-glucuronate)(in) + ATP + H2O = 17beta-estradiol 17-O-(beta-D-glucuronate)(out) + ADP + phosphate + H(+). It catalyses the reaction methotrexate(in) + ATP + H2O = methotrexate(out) + ADP + phosphate + H(+). The catalysed reaction is riboflavin(in) + ATP + H2O = riboflavin(out) + ADP + phosphate + H(+). The enzyme catalyses pheophorbide a(in) + ATP + H2O = pheophorbide a(out) + ADP + phosphate + H(+). It carries out the reaction itaconate(in) + ATP + H2O = itaconate(out) + ADP + phosphate + H(+). Broad substrate specificity ATP-dependent transporter of the ATP-binding cassette (ABC) family that actively extrudes a wide variety of physiological compounds, dietary toxins and xenobiotics from cells. Involved in porphyrin homeostasis, mediating the export of protoporphyrin IX (PPIX) from both mitochondria to cytosol and cytosol to extracellular space, it also functions in the cellular export of heme. Also mediates the efflux of sphingosine-1-P from cells. Acts as a urate exporter functioning in both renal and extrarenal urate excretion. In kidney, it also functions as a physiological exporter of the uremic toxin indoxyl sulfate. Also involved in the excretion of steroids like estrone 3-sulfate/E1S, 3beta-sulfooxy-androst-5-en-17-one/DHEAS, and other sulfate conjugates. Mediates the secretion of the riboflavin and biotin vitamins into milk. Extrudes pheophorbide a, a phototoxic porphyrin catabolite of chlorophyll, reducing its bioavailability. Plays an important role in the exclusion of xenobiotics from the brain. It confers to cells a resistance to multiple drugs and other xenobiotics including mitoxantrone, pheophorbide, camptothecin, methotrexate, azidothymidine, and the anthracyclines daunorubicin and doxorubicin, through the control of their efflux. In placenta, it limits the penetration of drugs from the maternal plasma into the fetus. May play a role in early stem cell self-renewal by blocking differentiation. In inflammatory macrophages, exports itaconate from the cytosol to the extracellular compartment and limits the activation of TFEB-dependent lysosome biogenesis involved in antibacterial innate immune response. The chain is Broad substrate specificity ATP-binding cassette transporter ABCG2 (ABCG2) from Sus scrofa (Pig).